Reading from the N-terminus, the 151-residue chain is Nucleoside diphosphate kinase (151 aa).

The ATP site is built by lysine 11, phenylalanine 59, arginine 87, threonine 93, arginine 104, and asparagine 114. Catalysis depends on histidine 117, which acts as the Pros-phosphohistidine intermediate.

This sequence belongs to the NDK family. Homohexamer. The cofactor is Mg(2+).

It carries out the reaction a 2'-deoxyribonucleoside 5'-diphosphate + ATP = a 2'-deoxyribonucleoside 5'-triphosphate + ADP. It catalyses the reaction a ribonucleoside 5'-diphosphate + ATP = a ribonucleoside 5'-triphosphate + ADP. Functionally, major role in the synthesis of nucleoside triphosphates other than ATP. The ATP gamma phosphate is transferred to the NDP beta phosphate via a ping-pong mechanism, using a phosphorylated active-site intermediate. The sequence is that of Nucleoside diphosphate kinase from Ginglymostoma cirratum (Nurse shark).